The sequence spans 198 residues: UPF0301 protein Tfu_2389 (198 aa).

The protein belongs to the UPF0301 (AlgH) family.

This is UPF0301 protein Tfu_2389 from Thermobifida fusca (strain YX).